Reading from the N-terminus, the 321-residue chain is Cytochrome f (321 aa).

An N-terminal signal peptide occupies residues 1–35; sequence MQNRNKNNWMKKWVIRSISILIILNIIAWPSISYA. Heme is bound by residues tyrosine 36, cysteine 56, cysteine 59, and histidine 60. The chain crosses the membrane as a helical span at residues 287–306; the sequence is IQGLLLFFVSVIMAQILLVL.

This sequence belongs to the cytochrome f family. In terms of assembly, the 4 large subunits of the cytochrome b6-f complex are cytochrome b6, subunit IV (17 kDa polypeptide, petD), cytochrome f and the Rieske protein, while the 4 small subunits are PetG, PetL, PetM and PetN. The complex functions as a dimer. Requires heme as cofactor.

Its subcellular location is the plastid. It is found in the chloroplast thylakoid membrane. Component of the cytochrome b6-f complex, which mediates electron transfer between photosystem II (PSII) and photosystem I (PSI), cyclic electron flow around PSI, and state transitions. The protein is Cytochrome f of Psilotum nudum (Whisk fern).